The sequence spans 762 residues: Centrosomal protein of 85 kDa (762 aa).

Disordered stretches follow at residues 1-26 and 94-119; these read MAMQ…IQKG and VMPS…SKLP. 2 stretches are compositionally biased toward polar residues: residues 14 to 26 and 98 to 111; these read HVTS…IQKG and TLGT…STPV. S17 is subject to Phosphoserine. 2 positions are modified to phosphoserine: S126 and S141. A mediates interaction with NEK2 and is required for its function in the suppression of centrosome disjunction region spans residues 257–433; the sequence is GLSKPLPSQV…QLIRESLKVA (177 aa). Coiled coils occupy residues 334 to 657 and 723 to 750; these read EHLL…RQAQ and PDVI…MSDR. The required for centrosome localization and for its function in the suppression of centrosome disjunction stretch occupies residues 434-476; the sequence is LQKHSEEVKKQEERVKGRDKHINNLKKKCQKESEQNREKQQRI. Basic and acidic residues-rich tracts occupy residues 443 to 455 and 463 to 474; these read KQEE…DKHI and QKESEQNREKQQ. Disordered regions lie at residues 443–474 and 541–570; these read KQEE…EKQQ and EAEF…VEME. At S623 the chain carries Phosphoserine.

It belongs to the CEP85 family. In terms of assembly, homodimer. Interacts with STIL (via N-terminus); this interaction is essential for robust PLK4 activation and efficient centriole assembly and for PLK4-dependent cell migration. Interacts with PLK4; required for CEP85 to be able to drive centriole duplication and cell migration.

The protein resides in the cytoplasm. It is found in the cytoskeleton. It localises to the microtubule organizing center. The protein localises to the centrosome. Its subcellular location is the spindle pole. The protein resides in the nucleus. It is found in the nucleolus. It localises to the centriole. The protein localises to the cell cortex. In terms of biological role, acts as a regulator of centriole duplication through a direct interaction with STIL, a key factor involved in the early steps of centriole formation. The CEP85-STIL protein complex acts as a modulator of PLK4-driven cytoskeletal rearrangements and directional cell motility. Acts as a negative regulator of NEK2 to maintain the centrosome integrity in interphase. Suppresses centrosome disjunction by inhibiting NEK2 kinase activity. The protein is Centrosomal protein of 85 kDa of Homo sapiens (Human).